A 177-amino-acid polypeptide reads, in one-letter code: Ribosome maturation factor RimM (177 aa).

Residues 98 to 177 (DDGYYWKDLM…TIEVDWDPGF (80 aa)) form the PRC barrel domain.

Belongs to the RimM family. Binds ribosomal protein uS19.

Its subcellular location is the cytoplasm. Its function is as follows. An accessory protein needed during the final step in the assembly of 30S ribosomal subunit, possibly for assembly of the head region. Essential for efficient processing of 16S rRNA. May be needed both before and after RbfA during the maturation of 16S rRNA. It has affinity for free ribosomal 30S subunits but not for 70S ribosomes. The chain is Ribosome maturation factor RimM from Enterobacter sp. (strain 638).